A 548-amino-acid chain; its full sequence is Nodulation protein NolO (548 aa).

This sequence belongs to the NodU/CmcH family.

Its function is as follows. Involved in 6-O-carbamoylation of Nod-factors. The polypeptide is Nodulation protein NolO (nolO) (Bradyrhizobium diazoefficiens (strain JCM 10833 / BCRC 13528 / IAM 13628 / NBRC 14792 / USDA 110)).